We begin with the raw amino-acid sequence, 404 residues long: Acetate kinase (404 aa).

Residue asparagine 7 coordinates Mg(2+). Lysine 14 serves as a coordination point for ATP. Arginine 95 provides a ligand contact to substrate. Aspartate 152 acts as the Proton donor/acceptor in catalysis. ATP contacts are provided by residues 212–216, 286–288, and 334–338; these read HLGNG, DMR, and GIGEN. Glutamate 388 is a Mg(2+) binding site.

This sequence belongs to the acetokinase family. Homodimer. The cofactor is Mg(2+). Mn(2+) is required as a cofactor.

Its subcellular location is the cytoplasm. It carries out the reaction acetate + ATP = acetyl phosphate + ADP. It functions in the pathway metabolic intermediate biosynthesis; acetyl-CoA biosynthesis; acetyl-CoA from acetate: step 1/2. Catalyzes the formation of acetyl phosphate from acetate and ATP. Can also catalyze the reverse reaction. The sequence is that of Acetate kinase from Lawsonia intracellularis (strain PHE/MN1-00).